A 113-amino-acid chain; its full sequence is UPF0122 protein LCA_0713 (113 aa).

Belongs to the UPF0122 family.

Its function is as follows. Might take part in the signal recognition particle (SRP) pathway. This is inferred from the conservation of its genetic proximity to ftsY/ffh. May be a regulatory protein. The chain is UPF0122 protein LCA_0713 from Latilactobacillus sakei subsp. sakei (strain 23K) (Lactobacillus sakei subsp. sakei).